The chain runs to 462 residues: Cysteine--tRNA ligase (462 aa).

C28 contributes to the Zn(2+) binding site. A 'HIGH' region motif is present at residues 30 to 40 (MTVYDYCHLGH). C209, H234, and E238 together coordinate Zn(2+). The 'KMSKS' region motif lies at 266–270 (KMAKS). Residue K269 coordinates ATP.

Belongs to the class-I aminoacyl-tRNA synthetase family. Monomer. It depends on Zn(2+) as a cofactor.

Its subcellular location is the cytoplasm. It carries out the reaction tRNA(Cys) + L-cysteine + ATP = L-cysteinyl-tRNA(Cys) + AMP + diphosphate. This Alkalilimnicola ehrlichii (strain ATCC BAA-1101 / DSM 17681 / MLHE-1) protein is Cysteine--tRNA ligase.